The sequence spans 559 residues: NAD(P)H-quinone oxidoreductase chain 4-2 (559 aa).

A run of 14 helical transmembrane segments spans residues 5–25 (FPWL…IPLI), 35–55 (WYAL…FWTN), 86–106 (ISMP…FAAW), 114–134 (LFYF…VAQD), 136–156 (LLLF…VCIW), 168–188 (FLLY…GLAF), 207–227 (IALE…KLAI), 242–262 (SAPV…YGLI), 274–294 (VYFA…GGFS), 310–330 (VSHM…GISG), 331–351 (AMLQ…LAGV), 374–394 (VFAL…MSGF), 417–437 (VTVF…LSML), and 488–508 (VFIA…PKLA).

It belongs to the complex I subunit 4 family.

It is found in the cellular thylakoid membrane. It carries out the reaction a plastoquinone + NADH + (n+1) H(+)(in) = a plastoquinol + NAD(+) + n H(+)(out). It catalyses the reaction a plastoquinone + NADPH + (n+1) H(+)(in) = a plastoquinol + NADP(+) + n H(+)(out). Its function is as follows. NDH-1 shuttles electrons from NAD(P)H, via FMN and iron-sulfur (Fe-S) centers, to quinones in the respiratory chain. The immediate electron acceptor for the enzyme in this species is believed to be plastoquinone. Couples the redox reaction to proton translocation (for every two electrons transferred, four hydrogen ions are translocated across the cytoplasmic membrane), and thus conserves the redox energy in a proton gradient. This Synechocystis sp. (strain ATCC 27184 / PCC 6803 / Kazusa) protein is NAD(P)H-quinone oxidoreductase chain 4-2 (ndhD2).